The primary structure comprises 207 residues: ATP synthase subunit delta (207 aa).

The protein belongs to the ATPase delta chain family. In terms of assembly, F-type ATPases have 2 components, F(1) - the catalytic core - and F(0) - the membrane proton channel. F(1) has five subunits: alpha(3), beta(3), gamma(1), delta(1), epsilon(1). F(0) has three main subunits: a(1), b(2) and c(10-14). The alpha and beta chains form an alternating ring which encloses part of the gamma chain. F(1) is attached to F(0) by a central stalk formed by the gamma and epsilon chains, while a peripheral stalk is formed by the delta and b chains.

It is found in the cell inner membrane. F(1)F(0) ATP synthase produces ATP from ADP in the presence of a proton or sodium gradient. F-type ATPases consist of two structural domains, F(1) containing the extramembraneous catalytic core and F(0) containing the membrane proton channel, linked together by a central stalk and a peripheral stalk. During catalysis, ATP synthesis in the catalytic domain of F(1) is coupled via a rotary mechanism of the central stalk subunits to proton translocation. Its function is as follows. This protein is part of the stalk that links CF(0) to CF(1). It either transmits conformational changes from CF(0) to CF(1) or is implicated in proton conduction. This is ATP synthase subunit delta from Psychrobacter cryohalolentis (strain ATCC BAA-1226 / DSM 17306 / VKM B-2378 / K5).